The chain runs to 130 residues: Small ribosomal subunit protein uS8 (130 aa).

It belongs to the universal ribosomal protein uS8 family. Part of the 30S ribosomal subunit. Contacts proteins S5 and S12.

Functionally, one of the primary rRNA binding proteins, it binds directly to 16S rRNA central domain where it helps coordinate assembly of the platform of the 30S subunit. This chain is Small ribosomal subunit protein uS8, found in Moorella thermoacetica (strain ATCC 39073 / JCM 9320).